Reading from the N-terminus, the 1205-residue chain is Bromodomain and PHD finger-containing protein 3 (1205 aa).

Disordered stretches follow at residues 1-27 (MRKP…KCSP) and 75-121 (NSNK…SFRM). A Phosphoserine modification is found at Ser-17. Polar residues predominate over residues 75–84 (NSNKENSEQP). Residues 89 to 99 (KSKKPSSKGKK) show a composition bias toward basic residues. Residues 212-262 (DAFCCVCLDDECHNSNVILFCDICNLAVHQECYGVPYIPEGQWLCRCCLQS) form a PHD-type 1 zinc finger. The segment at 266-299 (PVDCILCPNKGGAFKQTSDGHWAHVVCAIWIPEV) adopts a C2HC pre-PHD-type zinc-finger fold. The PHD-type 2 zinc finger occupies 323 to 387 (LTCYICKQKG…RKTAYCEAHS (65 aa)). Positions 387–472 (SPPGAATARR…AGQDTPSTLP (86 aa)) are disordered. A phosphoserine mark is found at Ser-400 and Ser-403. Acidic residues predominate over residues 417–432 (DGEEEEEEEVEEEEQE). A compositionally biased stretch (basic residues) spans 444–456 (VPKKSKMSLKQKI). An N6-acetyllysine mark is found at Lys-447, Lys-449, and Lys-671. The 105-residue stretch at 589 to 693 (LELMPFNVLL…DLGGAILRHA (105 aa)) folds into the Bromo domain. A phosphoserine mark is found at Ser-713 and Ser-740. Residues 779–897 (RQKLAQPPPP…LQLGNEPLQR (119 aa)) form a disordered region. The segment covering 817–827 (LQEEPEDDGDR) has biased composition (acidic residues). Over residues 839-851 (EPTGPAPSLSEQE) the composition is skewed to low complexity. Ser-900 bears the Phosphoserine mark. Disordered regions lie at residues 907-926 (LSLM…VGRR) and 931-1015 (FKKA…SECS). Residues 942–955 (RSPDRVLENGEDHG) show a composition bias toward basic and acidic residues. Phosphoserine occurs at positions 962 and 965. Positions 980 to 991 (SCSESEGERSPQ) are enriched in basic and acidic residues. A PWWP domain is found at 1076 to 1159 (PLELVWAKCR…RDKVLPLGVE (84 aa)).

In terms of assembly, component of some HBO1 complex composed of KAT7/HBO1, MEAF6, ING4 or ING5, and BRPF3. Component of the MOZ/MORF complex composed at least of ING5, KAT6A, KAT6B, MEAF6 and one of BRPF1, BRD1/BRPF2 and BRPF3. Interacts with KAT7/HBO1; the interaction is direct.

It localises to the nucleus. In terms of biological role, scaffold subunit of various histone acetyltransferase (HAT) complexes, such as the MOZ/MORF and HBO1 complexes, which have a histone H3 acetyltransferase activity. Plays a role in DNA replication initiation by directing KAT7/HBO1 specificity towards histone H3 'Lys-14' acetylation (H3K14ac), thereby facilitating the activation of replication origins. Component of the MOZ/MORF complex which has a histone H3 acetyltransferase activity. This chain is Bromodomain and PHD finger-containing protein 3, found in Homo sapiens (Human).